A 349-amino-acid polypeptide reads, in one-letter code: Ion-translocating oxidoreductase complex subunit D (349 aa).

The next 3 membrane-spanning stretches (helical) occupy residues valine 20–glycine 42, serine 77–valine 99, and alanine 124–alanine 144. An FMN phosphoryl threonine modification is found at threonine 185. A run of 5 helical transmembrane segments spans residues serine 212–leucine 232, tryptophan 239–leucine 259, alanine 265–threonine 285, alanine 291–isoleucine 311, and glycine 315–isoleucine 335.

It belongs to the NqrB/RnfD family. In terms of assembly, the complex is composed of six subunits: RnfA, RnfB, RnfC, RnfD, RnfE and RnfG. The cofactor is FMN.

It localises to the cell inner membrane. Part of a membrane-bound complex that couples electron transfer with translocation of ions across the membrane. The sequence is that of Ion-translocating oxidoreductase complex subunit D from Shewanella baltica (strain OS195).